A 197-amino-acid polypeptide reads, in one-letter code: Guanylate kinase (197 aa).

A Guanylate kinase-like domain is found at 6-191 (SKLIILSGPS…CVAQIEKIIS (186 aa)). 13 to 20 (GPSGVGKG) provides a ligand contact to ATP.

Belongs to the guanylate kinase family.

The protein localises to the cytoplasm. The catalysed reaction is GMP + ATP = GDP + ADP. Essential for recycling GMP and indirectly, cGMP. In Mesomycoplasma hyopneumoniae (strain 7448) (Mycoplasma hyopneumoniae), this protein is Guanylate kinase.